The following is a 798-amino-acid chain: MGPPKKSRKDRSGGDKFGKKRRAEDEAFTQLVDDNDSLDATESEGIPGAASKNAETNDEQINTDEYGAKDYRSQMQLRPDHGNRPLWVAPNGHVFLESFSPVYKHAHDFLIAISEPVCRPEHIHEYKLTAYSLYAAVSVGLQTHDIVEYLKRLSKTSIPEGILEFIRLCTLSYGKVKLVLKHNKYFIESPHPEVLQKLLKDPVIQKCRLIRSEGEDFIQGTLDGKAITQFGTKLPPGATDKPTPDPAAAAGADGTTAVPEDITDFYEKIDKEEEDEDEANLKTVSFEVAQEKIEVIQKRCIEIEHPLLAEYDFRNDTNNPDINIDLKPAAVLRPYQEKSLRKMFGNGRARSGVIVLPCGAGKSLVGVTACCTVRKRALVLCNSGVSVEQWKQQFKMWSTADDSMICRFTSEAKDKPMGCGILVTTYSMITHTQKRSWEAEQTMRWLQEQEWGIMVLDEVHTIPAKMFRRVLTIVQSHCKLGLTATLLREDDKIADLNFLIGPKLYEANWLELQKKGYIARVQCAEVWCPMSPEFYREYLTTKTSKKMLLYVMNPSKFRSCQFLIKYHEQRGDKTIVFSDNVFALKHYAIKMNKPFIYGPTSQNERIQILQNFKFNSKVNTIFVSKVADTSFDLPEANVLIQISSHGGSRRQEAQRLGRILRAKKGAIAEEYNAFFYTLVSQDTMEMSYSRKRQRFLVNQGYSYKVITHLKGMDTDSDLMYGTQEEQGQLLQLVLSASDLDCEDEKLPGEPGYRPSGSGGAVRRVGGLSSMSGGDDAIYYEHRKKNIGSVHPLFKKFRG.

Disordered stretches follow at residues 1 to 62 and 235 to 254; these read MGPP…EQIN and PPGA…GADG. Residues 6–22 carry the Nuclear localization signal motif; the sequence is KSRKDRSGGDKFGKKRR. Residues 10 to 25 show a composition bias toward basic and acidic residues; the sequence is DRSGGDKFGKKRRAED. Residues 33-42 show a composition bias toward acidic residues; sequence DDNDSLDATE. The region spanning 343–504 is the Helicase ATP-binding domain; that stretch reads MFGNGRARSG…DLNFLIGPKL (162 aa). 360 to 367 is an ATP binding site; the sequence is AGKSLVGV. The short motif at 457 to 460 is the DEVH box element; the sequence is DEVH. Positions 558–713 constitute a Helicase C-terminal domain; the sequence is RSCQFLIKYH…KVITHLKGMD (156 aa). Residues 746-765 form a disordered region; the sequence is LPGEPGYRPSGSGGAVRRVG.

Belongs to the helicase family. RAD25/XPB subfamily. Component of the 7-subunit TFIIH core complex composed of haywire/XPB/ERCC3, XPD/ERCC2, GTF2H1, GTF2H2, GTF2H3, GTF2H4 and GTF2H5, which is active in NER. The core complex associates with the 3-subunit CDK-activating kinase (CAK) module composed of CCNH/cyclin H, CDK7 and MNAT1 to form the 10-subunit holoenzyme (holo-TFIIH) active in transcription. Interacts with PUF60. Interacts with ATF7IP. Interacts with Epstein-Barr virus EBNA2.

It localises to the nucleus. The catalysed reaction is Couples ATP hydrolysis with the unwinding of duplex DNA by translocating in the 3'-5' direction.. It catalyses the reaction ATP + H2O = ADP + phosphate + H(+). In terms of biological role, ATP-dependent 3'-5' DNA helicase/translocase; binds dsDNA rather than ssDNA, unzipping it in a translocase rather than classical helicase activity. Component of the general transcription and DNA repair factor IIH (TFIIH) core complex. When complexed to CDK-activating kinase (CAK), involved in RNA transcription by RNA polymerase II. The ATPase activity of XPB/ERCC3, but not its helicase activity, is required for DNA opening; it may wrap around the damaged DNA wedging it open, causing localized melting and twisting that allows XPD/ERCC2 helicase to anchor. The ATP-dependent helicase activity of XPB/ERCC3 may be required for promoter escape. Also involved in transcription-coupled nucleotide excision repair (NER) of damaged DNA. In NER, TFIIH acts by opening DNA around the lesion to allow the excision of the damaged oligonucleotide and its replacement by a new DNA fragment. The structure of the TFIIH transcription complex differs from the NER-TFIIH complex; large movements by XPD/ERCC2 and XPB/ERCC3 are stabilized by XPA. The chain is General transcription and DNA repair factor IIH helicase/translocase subunit XPB (hay) from Drosophila melanogaster (Fruit fly).